The primary structure comprises 225 residues: UPF0758 protein Sbal223_0402 (225 aa).

The MPN domain occupies 102–224; that stretch reads VLTNPDLTRD…IVSFAERGWI (123 aa). Zn(2+)-binding residues include histidine 173, histidine 175, and aspartate 186. Positions 173–186 match the JAMM motif motif; sequence HNHPSGIAEPSQAD.

This sequence belongs to the UPF0758 family.

This Shewanella baltica (strain OS223) protein is UPF0758 protein Sbal223_0402.